The primary structure comprises 45 residues: Turripeptide OL11-like (45 aa).

Disulfide bonds link Cys1/Cys31, Cys5/Cys24, and Cys13/Cys45. The Kazal-like domain maps to 1–45 (CMTICTMEYWPVCGSDGKTYPNKCHLTSTACTSQKDITVLHEGKC).

This sequence belongs to the conopeptide P-like superfamily. In terms of tissue distribution, expressed by the venom duct.

It localises to the secreted. In terms of biological role, acts as a neurotoxin by inhibiting an ion channel. May also act as a serine protease inhibitor, since it possess the kazal serine protease inhibitor signature. This Lophiotoma albina (Sea snail) protein is Turripeptide OL11-like.